A 239-amino-acid chain; its full sequence is Phosphothreonine lyase OspF (239 aa).

H104 (proton donor) is an active-site residue. The Proton acceptor role is filled by K134.

This sequence belongs to the phosphothreonine lyase family.

Its subcellular location is the secreted. Catalyzes the removal of the phosphate group from the phosphothreonine in the mitogen-activated protein kinases p38, phosphothreonine in the mitogen-activated protein kinases such as MAPK2/ERK2, MAPK3/ERK1, MAPK8 and MAPK14 in an irreversible reaction, thus preventing the downstream phosphorylation of histone H3. This epigenetic modification results in inhibition of the transcription of a specific subset of pro-inflammatory genes, and ultimately to a reduced immune response against the invading pathogen. The diminished immune response enhances the bacterium's ability to disseminate and multiply within the host. The sequence is that of Phosphothreonine lyase OspF (ospF) from Shigella boydii serotype 4 (strain Sb227).